Consider the following 552-residue polypeptide: Hyaluronan synthase 2 (552 aa).

Over methionine 1 to arginine 11 the chain is Cytoplasmic. A helical membrane pass occupies residues isoleucine 12 to valine 32. At glycine 33 to serine 45 the chain is on the extracellular side. Residues phenylalanine 46–leucine 66 form a helical membrane-spanning segment. The Cytoplasmic portion of the chain corresponds to glutamate 67–leucine 374. Threonine 110 is subject to Phosphothreonine. Lysine 190 participates in a covalent cross-link: Glycyl lysine isopeptide (Lys-Gly) (interchain with G-Cter in ubiquitin). The O-linked (GlcNAc) serine glycan is linked to serine 221. Position 328 is a phosphothreonine (threonine 328). A helical membrane pass occupies residues tryptophan 375 to isoleucine 395. The Extracellular segment spans residues glutamine 396–lysine 402. Residues isoleucine 403–phenylalanine 423 form a helical membrane-spanning segment. The Cytoplasmic segment spans residues alanine 424–glycine 429. The helical transmembrane segment at asparagine 430–alanine 450 threads the bilayer. Residues lysine 451–phenylalanine 475 lie on the Extracellular side of the membrane. A helical membrane pass occupies residues isoleucine 476 to isoleucine 496. The Cytoplasmic segment spans residues tyrosine 497–threonine 510. Residues valine 511–valine 531 traverse the membrane as a helical segment. Residues valine 532–valine 552 lie on the Extracellular side of the membrane.

The protein belongs to the NodC/HAS family. As to quaternary structure, homodimer; dimerization promotes enzymatic activity. Forms heterodimer with HAS3. Forms heterodimer with HAS1. Requires Mg(2+) as cofactor. Post-translationally, phosphorylation at Thr-328 is essential for hyaluronan synthase activity. O-GlcNAcylation at Ser-221 increases the stability of HAS2 and plasma membrane localization. In terms of processing, ubiquitination at Lys-190; this ubiquitination is essential for hyaluronan synthase activity and homo- or hetero-oligomerization. Can also be poly-ubiquitinated. Deubiquitinated by USP17 and USP4. USP17 efficiently removes 'Lys-63'- and 'Lys-48'-linked polyubiquitin chains, whereas USP4 preferentially removes monoubiquitination and, partially, both 'Lys-63'- and 'Lys-48'-linked polyubiquitin chain. Expressed in corneal endothelial cells.

It localises to the cell membrane. The protein localises to the endoplasmic reticulum membrane. It is found in the vesicle. The protein resides in the golgi apparatus membrane. Its subcellular location is the lysosome. The enzyme catalyses [hyaluronan](n) + UDP-N-acetyl-alpha-D-glucosamine = N-acetyl-beta-D-glucosaminyl-(1-&gt;4)-[hyaluronan](n) + UDP + H(+). The catalysed reaction is N-acetyl-beta-D-glucosaminyl-(1-&gt;4)-[hyaluronan](n) + UDP-alpha-D-glucuronate = [hyaluronan](n+1) + UDP + H(+). It participates in glycan biosynthesis; hyaluronan biosynthesis. Its function is as follows. Catalyzes the addition of GlcNAc or GlcUA monosaccharides to the nascent hyaluronan polymer. Therefore, it is essential to hyaluronan synthesis a major component of most extracellular matrices that has a structural role in tissues architectures and regulates cell adhesion, migration and differentiation. This is one of three isoenzymes responsible for cellular hyaluronan synthesis and it is particularly responsible for the synthesis of high molecular mass hyaluronan. The chain is Hyaluronan synthase 2 (HAS2) from Bos taurus (Bovine).